Here is a 434-residue protein sequence, read N- to C-terminus: KH domain-containing protein 3 (434 aa).

Residues Met-1–Glu-39 form an involved in RNA binding region. Residues Asp-40 to Ala-118 enclose the KH; atypical domain. Phosphothreonine occurs at positions 267 and 279. The segment at Val-334 to Leu-434 is required for interaction with NUMA1 and regulation of apoptosis in response to DNA damage.

It belongs to the KHDC1 family. In terms of assembly, component of the subcortical maternal complex (SCMC), at least composed of NLRP5, KHDC3, OOEP, and TLE6. Within the complex, interacts with NLRP5, KHDC3 and TLE6. The SCMC may facilitate translocation of its components between the nuclear and cytoplasmic compartments. Forms a scaffold complex with OOEP/FLOPED, and interacts with BLM and TRIM25 at DNA replication forks. Interacts with PARP1; the interaction is increased following the formation of DNA double-strand breaks. Interacts (via C-terminus) with NUMA1.

It localises to the cytoplasm. Its subcellular location is the cell cortex. The protein localises to the nucleus. It is found in the mitochondrion. The protein resides in the cytoskeleton. It localises to the microtubule organizing center. Its subcellular location is the centrosome. The protein localises to the chromosome. Functionally, component of the subcortical maternal complex (SCMC), a multiprotein complex that plays a key role in early embryonic development. The SCMC complex is a structural constituent of cytoplasmic lattices, which consist in fibrous structures found in the cytoplasm of oocytes and preimplantation embryos. They are required to store maternal proteins critical for embryonic development, such as proteins that control epigenetic reprogramming of the preimplantation embryo, and prevent their degradation or activation. KHDC3 ensures proper spindle assembly by regulating the localization of AURKA via RHOA signaling and of PLK1 via a RHOA-independent process. Required for the localization of MAD2L1 to kinetochores to enable spindle assembly checkpoint function. As part of the OOEP-KHDC3 scaffold, recruits BLM and TRIM25 to DNA replication forks, thereby promoting the ubiquitination of BLM by TRIM25, enhancing BLM retainment at replication forks and therefore promoting stalled replication fork restart. Regulates homologous recombination-mediated DNA repair via recruitment of RAD51 to sites of DNA double-strand breaks, and sustainment of PARP1 activity, which in turn modulates downstream ATM or ATR activation. Activation of ATM or ATR in response to DNA double-strand breaks may be cell-type specific. Its role in DNA double-strand break repair is independent of its role in restarting stalled replication forks. Promotes neural stem cell neurogenesis and neuronal differentiation in the hippocampus. May regulate normal development of learning, memory and anxiety. Capable of binding RNA. This is KH domain-containing protein 3 from Rattus norvegicus (Rat).